A 57-amino-acid polypeptide reads, in one-letter code: UPF0391 membrane protein Nwi_2359 (57 aa).

The next 2 membrane-spanning stretches (helical) occupy residues Trp-4 to Ala-24 and Ile-30 to Phe-50.

The protein belongs to the UPF0391 family.

Its subcellular location is the cell membrane. In Nitrobacter winogradskyi (strain ATCC 25391 / DSM 10237 / CIP 104748 / NCIMB 11846 / Nb-255), this protein is UPF0391 membrane protein Nwi_2359.